The following is a 223-amino-acid chain: Ribose-5-phosphate isomerase A (223 aa).

Residues 32–35 (TGST), 85–88 (DGAD), and 98–101 (KGGG) contribute to the substrate site. Glu107 functions as the Proton acceptor in the catalytic mechanism. Position 125 (Lys125) interacts with substrate.

Belongs to the ribose 5-phosphate isomerase family. Homodimer.

It catalyses the reaction aldehydo-D-ribose 5-phosphate = D-ribulose 5-phosphate. The protein operates within carbohydrate degradation; pentose phosphate pathway; D-ribose 5-phosphate from D-ribulose 5-phosphate (non-oxidative stage): step 1/1. In terms of biological role, catalyzes the reversible conversion of ribose-5-phosphate to ribulose 5-phosphate. The protein is Ribose-5-phosphate isomerase A of Pseudomonas aeruginosa (strain LESB58).